The sequence spans 127 residues: Protein ApaG (127 aa).

An ApaG domain is found at 3–127 (DDPRYRVEVE…FVLSVPRTLH (125 aa)).

The polypeptide is Protein ApaG (Xanthomonas euvesicatoria pv. vesicatoria (strain 85-10) (Xanthomonas campestris pv. vesicatoria)).